A 226-amino-acid chain; its full sequence is Protein-L-isoaspartate(D-aspartate) O-methyltransferase (226 aa).

Residues 57 to 60 (VTIS), histidine 65, serine 89, 115 to 116 (EH), 147 to 148 (DG), and threonine 222 each bind S-adenosyl-L-homocysteine. Serine 60 is an active-site residue.

It belongs to the methyltransferase superfamily. L-isoaspartyl/D-aspartyl protein methyltransferase family. In terms of assembly, monomer.

It is found in the cytoplasm. Its subcellular location is the cytosol. The enzyme catalyses [protein]-L-isoaspartate + S-adenosyl-L-methionine = [protein]-L-isoaspartate alpha-methyl ester + S-adenosyl-L-homocysteine. Its function is as follows. Initiates the repair of damaged proteins by catalyzing methyl esterification of L-isoaspartyl and D-aspartyl residues produced by spontaneous isomerization and racemization of L-aspartyl and L-asparaginyl residues in aging peptides and proteins. The polypeptide is Protein-L-isoaspartate(D-aspartate) O-methyltransferase (Pcmt) (Drosophila melanogaster (Fruit fly)).